A 525-amino-acid chain; its full sequence is GMP synthase [glutamine-hydrolyzing] (525 aa).

The region spanning 9-207 (RILILDFGSQ…VLGICGCEAL (199 aa)) is the Glutamine amidotransferase type-1 domain. Cysteine 86 acts as the Nucleophile in catalysis. Active-site residues include histidine 181 and glutamate 183. The GMPS ATP-PPase domain maps to 208–400 (WTSATIIEDA…LGLPYDMLYR (193 aa)). Position 235–241 (235–241 (SGGVDSS)) interacts with ATP.

As to quaternary structure, homodimer.

It carries out the reaction XMP + L-glutamine + ATP + H2O = GMP + L-glutamate + AMP + diphosphate + 2 H(+). Its pathway is purine metabolism; GMP biosynthesis; GMP from XMP (L-Gln route): step 1/1. Functionally, catalyzes the synthesis of GMP from XMP. This chain is GMP synthase [glutamine-hydrolyzing], found in Yersinia pestis bv. Antiqua (strain Antiqua).